The following is a 277-amino-acid chain: Collectin-10 (277 aa).

Residues 1-27 (MSRKKEQQLRKYGTLVVLFIFQVQIFG) form the signal peptide. Residues 41–82 (THTILPGPKGDDGEKGDRGEVGKQGKVGPKGPKGNKGTVGDV) are disordered. Basic and acidic residues predominate over residues 49–63 (KGDDGEKGDRGEVGK). Residues 56–115 (GDRGEVGKQGKVGPKGPKGNKGTVGDVGDQGMLGKIGPIGGKGDKGAKGISGVSGKKGKA) form the Collagen-like domain. Residues 64–79 (QGKVGPKGPKGNKGTV) show a composition bias toward low complexity. The region spanning 155-271 (TDEKFYYIVK…CQVTIYFICE (117 aa)) is the C-type lectin domain. Cystine bridges form between cysteine 176-cysteine 270 and cysteine 248-cysteine 262. Residue asparagine 258 is glycosylated (N-linked (GlcNAc...) asparagine).

It belongs to the COLEC10/COLEC11 family. As to expression, widely expressed. Highly expressed in lung. Weakly expressed in larynx, syrinx and cranial air sac. Expressed throughout the lower gastrointestinal tract in increasing levels starting from a faint signal in duodenum and ending with relatively high signals in proctodeum, coprodeum and urodeum. In the upper part of the gastrointestinal tract, expressed in tongue, crop, and mucosa of the crop.

It is found in the secreted. The protein resides in the golgi apparatus. It localises to the cytoplasm. Functionally, lectin that binds to various sugars: galactose &gt; mannose = fucose &gt; N-acetylglucosamine &gt; N-acetylgalactosamine. Acts as a chemoattractant, probably involved in the regulation of cell migration. This chain is Collectin-10 (COLEC10), found in Gallus gallus (Chicken).